A 285-amino-acid chain; its full sequence is Small ribosomal subunit protein uS2 (285 aa).

The disordered stretch occupies residues 229-285 (RHNGKSNAAEEPMAEWERELLEQHEEQKSQDAAPAEQSAPAAEAPAETEQKDAPAAE). Residues 243-257 (EWERELLEQHEEQKS) show a composition bias toward basic and acidic residues. Positions 260–275 (AAPAEQSAPAAEAPAE) are enriched in low complexity. Basic and acidic residues predominate over residues 276–285 (TEQKDAPAAE).

It belongs to the universal ribosomal protein uS2 family.

This chain is Small ribosomal subunit protein uS2, found in Kocuria rhizophila (strain ATCC 9341 / DSM 348 / NBRC 103217 / DC2201).